Consider the following 585-residue polypeptide: Probable monoterpene synthase MTS1, chloroplastic (585 aa).

A disordered region spans residues 1-29 (MSLSGVPLSAGLAPSPSNKPTNGKGQNIV). Residues 1 to 31 (MSLSGVPLSAGLAPSPSNKPTNGKGQNIVRR) constitute a chloroplast transit peptide. Polar residues predominate over residues 15-25 (SPSNKPTNGKG). The (2E)-geranyl diphosphate site is built by Arg298, Asp335, Asp339, Arg476, and Asp479. Mg(2+) contacts are provided by Asp335 and Asp339. The DDXXD motif motif lies at 335–339 (DDIYD). 3 residues coordinate Mg(2+): Asp479, Thr483, and Glu487.

The protein belongs to the terpene synthase family. Tpsb subfamily. Mg(2+) is required as a cofactor. Mn(2+) serves as cofactor. Expressed in trichomes. Detected in flowers, but not in leaves.

It is found in the plastid. Its subcellular location is the chloroplast. The protein is Probable monoterpene synthase MTS1, chloroplastic of Humulus lupulus (European hop).